The primary structure comprises 686 residues: Antigen peptide transporter 2 (686 aa).

Topologically, residues 1–6 (MRLPDL) are lumenal. The helical transmembrane segment at 7–27 (RPWTSLLLVDAALLWLLQGPL) threads the bilayer. Over 28–56 (GTLLPQGLPGLWLEGTLRLGGLWGLLKLR) the chain is Cytoplasmic. The chain crosses the membrane as a helical span at residues 57 to 77 (GLLGFVGTLLLPLCLATPLTV). The Lumenal segment spans residues 78–98 (SLRALVAGASRAPPARVASAP). Residues 99–119 (WSWLLVGYGAAGLSWSLWAVL) traverse the membrane as a helical segment. Residues 120 to 148 (SPPGAQEKEQDQVNNKVLMWRLLKLSRPD) are Cytoplasmic-facing. The chain crosses the membrane as a helical span at residues 149–169 (LPLLVAAFFFLVLAVLGETLI). An ABC transmembrane type-1 domain is found at 152–435 (LVAAFFFLVL…LVYIYGDMLS (284 aa)). The Lumenal portion of the chain corresponds to 170–187 (PHYSGRVIDILGGDFDPH). A helical transmembrane segment spans residues 188–208 (AFASAIFFMCLFSFGSSLSAG). At 209–266 (CRGGCFTYTMSRINLRIREQLFSSLLRQDLGFFQETKTGELNSRLSSDTTLMSNWLPL) the chain is on the cytoplasmic side. Residues 267–287 (NANVLLRSLVKVVGLYGFMLS) form a helical membrane-spanning segment. At 288–293 (ISPRLT) the chain is on the lumenal side. A helical transmembrane segment spans residues 294 to 314 (LLSLLHMPFTIAAEKVYNTRH). The interval 301 to 389 (PFTIAAEKVY…RRVLHLGVQM (89 aa)) is part of the peptide-binding site. Residues 315–374 (QEVLREIQDAVARAGQVVREAVGGLQTVRSFGAEEHEVCRYKEALEQCRQLYWRRDLERA) are Cytoplasmic-facing. A helical membrane pass occupies residues 375 to 395 (LYLLVRRVLHLGVQMLMLSCG). Residues 396–408 (LQQMQDGELTQGS) are Lumenal-facing. A helical transmembrane segment spans residues 409-429 (LLSFMIYQESVGSYVQTLVYI). A part of the peptide-binding site region spans residues 414-433 (IYQESVGSYVQTLVYIYGDM). Residues 430 to 686 (YGDMLSNVGA…EGKLQKLAQL (257 aa)) lie on the Cytoplasmic side of the membrane. Positions 468-686 (VKFQDVSFAY…EGKLQKLAQL (219 aa)) constitute an ABC transporter domain. 503–510 (GPNGSGKS) provides a ligand contact to ATP.

This sequence belongs to the ABC transporter superfamily. ABCB family. MHC peptide exporter (TC 3.A.1.209) subfamily. Heterodimer of TAP1 and TAP2 (TAP1-TAP2). A component of the peptide loading complex (PLC), interacts via TAPBP with MHCI heterodimer; this interaction mediates peptide-MHCI assembly. Recruits TAPBP in a 1:1 stoichiometry. Interacts with classical MHCI such as HLA-A*02-B2M; this interaction is obligatory for the loading of peptide epitopes. Interacts with non-classical MHCI molecules including HLA-E-B2M and HLA-F-B2M as well as PLC component CALR before the peptide loading. In terms of assembly, (Microbial infection) Interacts with Epstein-Barr virus BLNF2a. As to quaternary structure, (Microbial infection) Interacts with herpes simplex virus US12/ICP47. (Microbial infection) Interacts with adenovirus E3-19K glycoprotein, which binds TAP1-TAP2 and acts as a TAPBP inhibitor, preventing TAP1-TAP2 association with MHCI. Requires Mg(2+) as cofactor.

It localises to the endoplasmic reticulum membrane. It catalyses the reaction a peptide antigen(in) + ATP + H2O = a peptide antigen(out) + ADP + phosphate + H(+). With respect to regulation, inhibited at high ER lumenal peptide concentrations. (Microbial infection) Inhibited by herpes simplex virus US12/ICP47 protein, which blocks the peptide-binding site of TAP1-TAP2. Its activity is regulated as follows. (Microbial infection) Inhibited by human cytomegalovirus US6 glycoprotein, which binds to the lumenal side of TAP1-TAP2 complex and inhibits peptide translocation by specifically blocking ATP-binding and preventing TAP1-TAP2 conformational rearrangement induced by peptide binding. Functionally, ABC transporter associated with antigen processing. In complex with TAP1 mediates unidirectional translocation of peptide antigens from cytosol to endoplasmic reticulum (ER) for loading onto MHC class I (MHCI) molecules. Uses the chemical energy of ATP to export peptides against the concentration gradient. During the transport cycle alternates between 'inward-facing' state with peptide binding site facing the cytosol to 'outward-facing' state with peptide binding site facing the ER lumen. Peptide antigen binding to ATP-loaded TAP1-TAP2 induces a switch to hydrolysis-competent 'outward-facing' conformation ready for peptide loading onto nascent MHCI molecules. Subsequently ATP hydrolysis resets the transporter to the 'inward facing' state for a new cycle. Typically transports intracellular peptide antigens of 8 to 13 amino acids that arise from cytosolic proteolysis via IFNG-induced immunoproteasome. Binds peptides with free N- and C-termini, the first three and the C-terminal residues being critical. Preferentially selects peptides having a highly hydrophobic residue at position 3 and hydrophobic or charged residues at the C-terminal anchor. Proline at position 2 has the most destabilizing effect. As a component of the peptide loading complex (PLC), acts as a molecular scaffold essential for peptide-MHCI assembly and antigen presentation. The sequence is that of Antigen peptide transporter 2 from Homo sapiens (Human).